The chain runs to 201 residues: MARNFELSLILFVLYLSTAAIVMARNLEEESSGDTEFIKASCETTSYPDRCFQSLSSYASEIKKQPRKLAETALAVSIARAKSAKTYVSEMTDYKGITKRQHEAVADCLEEMGDTVDRLSNSLKELKHLEEGDSGEDFWFCLSNVRTWTSAALTDETACMDGFGGKAMAGELKSLIRTHIVSVAEETSNALALINDFASKH.

An N-terminal signal peptide occupies residues 1–24 (MARNFELSLILFVLYLSTAAIVMA). Disulfide bonds link cysteine 42–cysteine 51 and cysteine 108–cysteine 159.

This sequence belongs to the PMEI family. Binds reversibly to PME3 to inhibit its activity; the stability of the PME3-PMEI7 complex and the inhibition of the pectin methylesterase (PME) activity is pH-dependent, based on protonation status of amino-acids at the complex interface. In terms of tissue distribution, accumulates in etiolated hypocotyls (at protein level).

It localises to the secreted. The protein resides in the extracellular space. It is found in the apoplast. Its subcellular location is the cell wall. Functionally, pectin methylesterase (PME) inhibitor that can target PME3 in a pH-dependent manner, mainly in slightly acidic conditions (pH 6.0 and 5.0) but not at pH 7.0; this processus relies on changes in the protonation of amino acids involved in intermolecular and intramolecular interactions. Regulates homogalacturonan methylesterification during plant development. This chain is Pectinesterase inhibitor 7, found in Arabidopsis thaliana (Mouse-ear cress).